The following is a 578-amino-acid chain: MAFLWLFSLWLLVPGTQGTKDGDMRLVNGASANEGRVEIFYRGQWGTVCDNLWNILDANVVCRALGYENATQALGRAAFGPGRGPVMLDEVECTGTEPSLANCSSLGWLKSRCGHEKDAGVVCSNETGGVHILDLSGDLPNALGQIFDSQQGCDLFIQVTGQGHGDLTICAHKLILNTNPEAQALWQVVGSSVIMRVDAECMPVVRDFLRYFYSRRIEVTMSSVKCLHKLASAYGATQLQDYCGRLFATLLPQDPTFRTPLELYAYAQATRDSVLEDLCVQFLAWNFEPLTQAEAWLSVPTALLQALLSKSDLAVSSELDLLKAVDQWSMESSASHAEVERLLEQVRFPMVLPQELFELQFNLSLYEGHRELFQRKTMEALEFHTVPFRVLAKYRGLNLTEDTYQPRLYTSSTWSTLVTESSSRSRAAVQVYGYAQYYPYGYDSRRWYYPYQSFQTPQHPSFLFVDKLISWSATYLPTVQSCWNYGFSCTPEELPVLGLTKSSYSEPAIGYENKALMLCGGYSVVDVANFAGSKAPIPSALDTNSSKISSLFPCSSGAFSGFRVVIRPFYLTNSTDLD.

The signal sequence occupies residues 1 to 18 (MAFLWLFSLWLLVPGTQG). An SRCR domain is found at 24–124 (MRLVNGASAN…HEKDAGVVCS (101 aa)). 3 cysteine pairs are disulfide-bonded: Cys-49/Cys-113, Cys-62/Cys-123, and Cys-93/Cys-103. 2 N-linked (GlcNAc...) asparagine glycosylation sites follow: Asn-69 and Asn-102. A BTB domain is found at 153 to 221 (CDLFIQVTGQ…FYSRRIEVTM (69 aa)). The BACK domain occupies 260-360 (PLELYAYAQA…VLPQELFELQ (101 aa)). N-linked (GlcNAc...) asparagine glycosylation is found at Asn-362 and Asn-398.

In terms of assembly, homodimers and homomultimers. The multimers form ring-like structures with a diameter of 30-40 nm. Binds LGALS1 and LGALS3. Binds ITGB1, COL4A1, COL5A1, COL6A1, FN1 and NID. The unglycosylated form interacts with PDE4DIP; this interaction, which is PDE4DIP isoform-specific, may connect a pericentrosomal complex to the gamma-tubulin ring complex (gamma-TuRC) to promote microtubule assembly and acetylation.

The protein resides in the secreted. The protein localises to the extracellular space. It is found in the extracellular matrix. In terms of biological role, promotes integrin-mediated cell adhesion. May stimulate host defense against viruses and tumor cells. The sequence is that of Galectin-3-binding protein (LGALS3BP) from Mesocricetus auratus (Golden hamster).